A 303-amino-acid polypeptide reads, in one-letter code: Putative S-adenosyl-L-methionine-dependent methyltransferase MAB_0213c (303 aa).

S-adenosyl-L-methionine-binding positions include Asp-126 and 155–156 (DL).

Belongs to the UPF0677 family.

Functionally, exhibits S-adenosyl-L-methionine-dependent methyltransferase activity. The protein is Putative S-adenosyl-L-methionine-dependent methyltransferase MAB_0213c of Mycobacteroides abscessus (strain ATCC 19977 / DSM 44196 / CCUG 20993 / CIP 104536 / JCM 13569 / NCTC 13031 / TMC 1543 / L948) (Mycobacterium abscessus).